A 250-amino-acid chain; its full sequence is Ureidoacrylate amidohydrolase RutB (250 aa).

The active-site Proton acceptor is D44. Residue K153 is part of the active site. The active-site Nucleophile is C186.

It belongs to the isochorismatase family. RutB subfamily.

It carries out the reaction (Z)-3-ureidoacrylate + H2O + H(+) = (Z)-3-aminoacrylate + NH4(+) + CO2. It catalyses the reaction (Z)-3-ureidoacrylate + H2O = (Z)-3-aminoacrylate + carbamate + H(+). The catalysed reaction is (Z)-2-methylureidoacrylate + H2O + H(+) = (Z)-2-methylaminoacrylate + NH4(+) + CO2. In terms of biological role, hydrolyzes ureidoacrylate to form aminoacrylate and carbamate. The carbamate hydrolyzes spontaneously, thereby releasing one of the nitrogen atoms of the pyrimidine ring as ammonia and one of its carbon atoms as CO2. The protein is Ureidoacrylate amidohydrolase RutB of Pantoea ananatis (strain LMG 20103).